The chain runs to 426 residues: Glutamate-1-semialdehyde 2,1-aminomutase (426 aa).

At K265 the chain carries N6-(pyridoxal phosphate)lysine.

This sequence belongs to the class-III pyridoxal-phosphate-dependent aminotransferase family. HemL subfamily. The cofactor is pyridoxal 5'-phosphate.

It is found in the cytoplasm. The catalysed reaction is (S)-4-amino-5-oxopentanoate = 5-aminolevulinate. Its pathway is porphyrin-containing compound metabolism; protoporphyrin-IX biosynthesis; 5-aminolevulinate from L-glutamyl-tRNA(Glu): step 2/2. In Hyperthermus butylicus (strain DSM 5456 / JCM 9403 / PLM1-5), this protein is Glutamate-1-semialdehyde 2,1-aminomutase.